The sequence spans 320 residues: Probable cell division protein WhiA (320 aa).

The H-T-H motif DNA-binding region spans 282–315 (TLKELGEMLSPAIGKSGVNHRLRKIDEIATKLQE).

The protein belongs to the WhiA family.

Involved in cell division and chromosome segregation. The sequence is that of Probable cell division protein WhiA from Alkaliphilus oremlandii (strain OhILAs) (Clostridium oremlandii (strain OhILAs)).